The sequence spans 469 residues: Tetratricopeptide repeat protein 38 (469 aa).

TPR repeat units lie at residues 107–140 (REKL…HPTD), 179–212 (SYVK…ERTD), and 251–284 (CHVY…QCFA).

It belongs to the TTC38 family.

This is Tetratricopeptide repeat protein 38 (ttc38) from Xenopus laevis (African clawed frog).